A 179-amino-acid chain; its full sequence is Large ribosomal subunit protein uL5 (179 aa).

The protein belongs to the universal ribosomal protein uL5 family. In terms of assembly, part of the 50S ribosomal subunit; part of the 5S rRNA/L5/L18/L25 subcomplex. Contacts the 5S rRNA and the P site tRNA. Forms a bridge to the 30S subunit in the 70S ribosome.

In terms of biological role, this is one of the proteins that bind and probably mediate the attachment of the 5S RNA into the large ribosomal subunit, where it forms part of the central protuberance. In the 70S ribosome it contacts protein S13 of the 30S subunit (bridge B1b), connecting the 2 subunits; this bridge is implicated in subunit movement. Contacts the P site tRNA; the 5S rRNA and some of its associated proteins might help stabilize positioning of ribosome-bound tRNAs. In Shewanella piezotolerans (strain WP3 / JCM 13877), this protein is Large ribosomal subunit protein uL5.